The primary structure comprises 199 residues: Interleukin-11 (199 aa).

The signal sequence occupies residues 1 to 21 (MNCVCRLVLVVLSLWPDTAVA). An important for interaction with IL11RA and for the stimulation of cell proliferation region spans residues 182–190 (HLTLDWAVR).

This sequence belongs to the IL-6 superfamily. Interacts with IL11RA to associate with IL6ST, giving rise to a multimeric signaling complex.

Its subcellular location is the secreted. Cytokine that stimulates the proliferation of hematopoietic stem cells and megakaryocyte progenitor cells and induces megakaryocyte maturation resulting in increased platelet production. Also promotes the proliferation of hepatocytes in response to liver damage. Binding to its receptor formed by IL6ST and IL11RA activates a signaling cascade that promotes cell proliferation. Signaling leads to the activation of intracellular protein kinases and the phosphorylation of STAT3. The interaction with the membrane-bound IL11RA and IL6ST stimulates 'classic signaling', whereas the binding of IL11 and soluble IL11RA to IL6ST stimulates 'trans-signaling'. The sequence is that of Interleukin-11 from Homo sapiens (Human).